A 407-amino-acid chain; its full sequence is F-box protein SKIP23 (407 aa).

Residues Val-2 to Leu-50 enclose the F-box domain.

Part of a SCF (ASK-cullin-F-box) protein ligase complex. Interacts with SKP1A/ASK1.

The protein localises to the nucleus. Its pathway is protein modification; protein ubiquitination. Component of SCF(ASK-cullin-F-box) E3 ubiquitin ligase complexes, which may mediate the ubiquitination and subsequent proteasomal degradation of target proteins. This Arabidopsis thaliana (Mouse-ear cress) protein is F-box protein SKIP23 (SKIP23).